The sequence spans 202 residues: Ribosomal RNA small subunit methyltransferase G (202 aa).

S-adenosyl-L-methionine-binding positions include glycine 75, phenylalanine 80, 125–126, and arginine 139; that span reads VQ.

Belongs to the methyltransferase superfamily. RNA methyltransferase RsmG family.

The protein localises to the cytoplasm. Its function is as follows. Specifically methylates the N7 position of a guanine in 16S rRNA. The protein is Ribosomal RNA small subunit methyltransferase G of Mesomycoplasma hyopneumoniae (strain 232) (Mycoplasma hyopneumoniae).